We begin with the raw amino-acid sequence, 604 residues long: Sulfite reductase [NADPH] flavoprotein alpha-component (604 aa).

In terms of domain architecture, Flavodoxin-like spans 68–206; that stretch reads LSIIFASQTG…PAAEWRKQAL (139 aa). Residues 74-79, 121-124, and 157-166 each bind FMN; these read SQTGNA, STNG, and LGDSSYEFFC. The 215-residue stretch at 239-453 folds into the FAD-binding FR-type domain; that stretch reads QNPYTATLLT…VEHNNNFKLP (215 aa). FAD-binding positions include Thr327, Gly361, 391–394, 409–411, Tyr415, and 424–427; these read RLYS, TVG, and GGAS. Residues 524-525, 530-534, and Asp566 contribute to the NADP(+) site; these read SR and KVYVQ. Tyr604 provides a ligand contact to FAD.

Belongs to the NADPH-dependent sulphite reductase flavoprotein subunit CysJ family. The protein in the N-terminal section; belongs to the flavodoxin family. It in the C-terminal section; belongs to the flavoprotein pyridine nucleotide cytochrome reductase family. In terms of assembly, alpha(8)-beta(8). The alpha component is a flavoprotein, the beta component is a hemoprotein. It depends on FAD as a cofactor. FMN serves as cofactor.

It carries out the reaction hydrogen sulfide + 3 NADP(+) + 3 H2O = sulfite + 3 NADPH + 4 H(+). Its pathway is sulfur metabolism; hydrogen sulfide biosynthesis; hydrogen sulfide from sulfite (NADPH route): step 1/1. In terms of biological role, component of the sulfite reductase complex that catalyzes the 6-electron reduction of sulfite to sulfide. This is one of several activities required for the biosynthesis of L-cysteine from sulfate. The flavoprotein component catalyzes the electron flow from NADPH -&gt; FAD -&gt; FMN to the hemoprotein component. The chain is Sulfite reductase [NADPH] flavoprotein alpha-component from Aliivibrio fischeri (strain ATCC 700601 / ES114) (Vibrio fischeri).